The chain runs to 429 residues: RNA-binding protein BRN2 (429 aa).

3 consecutive RRM domains span residues 12-93 (VKLF…YADG), 100-180 (HKLF…WADT), and 330-408 (ANLF…LKRD). Residues 410–429 (GQQQQQQQSKNPLFNGLLNS) form a disordered region. The segment covering 418–429 (SKNPLFNGLLNS) has biased composition (polar residues).

In terms of tissue distribution, expressed in roots, stems, flowers and siliques.

It localises to the cytoplasm. Functionally, RNA-binding protein involved in the regulation of flowering time. Acts as a repressor of the activity of SOC1, a transcriptional activator of flowering time. Binds to the 3'-UTR of SOC1 mRNA in the cytoplasm and participates in SOC1 mRNA decay, mediated by the distal region of the SOC1 3'-UTR. In Arabidopsis thaliana (Mouse-ear cress), this protein is RNA-binding protein BRN2.